The sequence spans 469 residues: Diacetylchitobiose binding protein NgcE (469 aa).

A signal peptide (tat-type signal) is located at residues Met1–Asp37. The tract at residues Cys30–Phe54 is disordered. Over residues Ser35–Lys48 the composition is skewed to basic and acidic residues.

Belongs to the bacterial solute-binding protein 1 family. The complex is composed of two ATP-binding proteins (MsiK), two transmembrane proteins (NgcF and NgcG) and a solute-binding protein (NgcE). Predicted to be exported by the Tat system. The position of the signal peptide cleavage has not been experimentally proven.

It is found in the cell membrane. Part of the ABC transporter complex NgcEFG-MsiK involved in N,N'-diacetylchitobiose ((GlcNAc)2) uptake. Binds (GlcNAc)2. Can also bind GlcNAc. In Streptomyces coelicolor (strain ATCC BAA-471 / A3(2) / M145), this protein is Diacetylchitobiose binding protein NgcE.